We begin with the raw amino-acid sequence, 385 residues long: Glucose-fructose oxidoreductase domain-containing protein 2 (385 aa).

The first 25 residues, 1-25 (MKMLPGVGVFGTGSSARVLVPLLRA), serve as a signal peptide directing secretion.

It belongs to the Gfo/Idh/MocA family.

The protein resides in the secreted. The protein localises to the extracellular space. It is found in the extracellular matrix. In terms of biological role, promotes matrix assembly. The protein is Glucose-fructose oxidoreductase domain-containing protein 2 (GFOD2) of Homo sapiens (Human).